We begin with the raw amino-acid sequence, 554 residues long: Glucose-6-phosphate isomerase (554 aa).

Catalysis depends on Glu-359, which acts as the Proton donor. Active-site residues include His-390 and Lys-518.

The protein belongs to the GPI family.

Its subcellular location is the cytoplasm. The catalysed reaction is alpha-D-glucose 6-phosphate = beta-D-fructose 6-phosphate. Its pathway is carbohydrate biosynthesis; gluconeogenesis. The protein operates within carbohydrate degradation; glycolysis; D-glyceraldehyde 3-phosphate and glycerone phosphate from D-glucose: step 2/4. Catalyzes the reversible isomerization of glucose-6-phosphate to fructose-6-phosphate. In Pseudomonas entomophila (strain L48), this protein is Glucose-6-phosphate isomerase.